We begin with the raw amino-acid sequence, 132 residues long: Protein FAM174C (132 aa).

The first 26 residues, 1–26 (MGPRVLQPPLLLLLLALLLAALPCGA), serve as a signal peptide directing secretion. The interval 34 to 66 (PAQVTLSPPPAVTNGSQPGAPHNSTHTRPPGAS) is disordered. The span at 46 to 60 (TNGSQPGAPHNSTHT) shows a compositional bias: polar residues. Residue N47 is glycosylated (N-linked (GlcNAc...) asparagine). A helical membrane pass occupies residues 73–93 (SFYVILGFCGLTALYFLIRAF). Residue T113 is modified to Phosphothreonine. Residues 113–132 (TEMASLDSDEETVFESRNLR) are disordered. Phosphoserine occurs at positions 117 and 120.

The protein belongs to the FAM174 family.

It is found in the membrane. The polypeptide is Protein FAM174C (Homo sapiens (Human)).